We begin with the raw amino-acid sequence, 90 residues long: ATP synthase subunit c (90 aa).

2 helical membrane passes run 4–24 (FVYSAVAAGFGIAIAAFGCGI) and 53–73 (IGLAMIESLSIYALVVSLILI).

Belongs to the ATPase C chain family. F-type ATPases have 2 components, F(1) - the catalytic core - and F(0) - the membrane proton channel. F(1) has five subunits: alpha(3), beta(3), gamma(1), delta(1), epsilon(1). F(0) has three main subunits: a(1), b(2) and c(10-14). The alpha and beta chains form an alternating ring which encloses part of the gamma chain. F(1) is attached to F(0) by a central stalk formed by the gamma and epsilon chains, while a peripheral stalk is formed by the delta and b chains.

The protein localises to the cell inner membrane. In terms of biological role, f(1)F(0) ATP synthase produces ATP from ADP in the presence of a proton or sodium gradient. F-type ATPases consist of two structural domains, F(1) containing the extramembraneous catalytic core and F(0) containing the membrane proton channel, linked together by a central stalk and a peripheral stalk. During catalysis, ATP synthesis in the catalytic domain of F(1) is coupled via a rotary mechanism of the central stalk subunits to proton translocation. Key component of the F(0) channel; it plays a direct role in translocation across the membrane. A homomeric c-ring of between 10-14 subunits forms the central stalk rotor element with the F(1) delta and epsilon subunits. The chain is ATP synthase subunit c from Syntrophobacter fumaroxidans (strain DSM 10017 / MPOB).